Here is a 328-residue protein sequence, read N- to C-terminus: DNA repair protein RAD51 homolog 4 (328 aa).

The tract at residues 1–83 (MGVLRVGLCP…ELKTSTAILS (83 aa)) is preferentially binds ssDNA. 107–114 (GGPGSGKT) provides a ligand contact to ATP.

Belongs to the RecA family. RAD51 subfamily. In terms of assembly, part of the BCDX2 complex consisting of RAD51B, RAD51C, RAD51D and XRCC2; the complex has a ring-like structure arranged into a flat disc around a central channel. In the absence of DNA, the BCDX2 subcomplex XRCC2:RAD51D formed a multimeric ring structure; in the presence of single-stranded DNA it formed a filamentous structure with the ssDNA. Interacts with SWSAP1 and ZSWIM7; involved in homologous recombination repair. Interacts with BLM; required for stimulation of BLM activity by the BCDX2 subcomplex XRCC2:RAD51D. In terms of tissue distribution, expressed in colon, prostate, spleen, testis, ovary, thymus and small intestine. Weakly expressed in leukocytes.

The protein resides in the nucleus. It is found in the cytoplasm. It localises to the cytoskeleton. The protein localises to the microtubule organizing center. Its subcellular location is the centrosome. The protein resides in the chromosome. It is found in the telomere. In terms of biological role, involved in the homologous recombination repair (HRR) pathway of double-stranded DNA breaks arising during DNA replication or induced by DNA-damaging agents. Bind to single-stranded DNA (ssDNA) and has DNA-dependent ATPase activity. Part of the RAD51 paralog protein complex BCDX2 which acts in the BRCA1-BRCA2-dependent HR pathway. Upon DNA damage, BCDX2 acts downstream of BRCA2 recruitment and upstream of RAD51 recruitment. BCDX2 binds predominantly to the intersection of the four duplex arms of the Holliday junction and to junction of replication forks. The BCDX2 complex was originally reported to bind single-stranded DNA, single-stranded gaps in duplex DNA and specifically to nicks in duplex DNA. Involved in telomere maintenance. The BCDX2 subcomplex XRCC2:RAD51D can stimulate Holliday junction resolution by BLM. The sequence is that of DNA repair protein RAD51 homolog 4 (RAD51D) from Homo sapiens (Human).